Consider the following 549-residue polypeptide: Cation/acetate symporter ActP (549 aa).

13 helical membrane passes run 33-53 (WQAI…TYWA), 77-97 (LAIA…ALVF), 103-123 (GLIY…LIAE), 148-168 (ILSA…QMVG), 183-203 (IAVV…GMLA), 206-226 (WVQI…AFMV), 262-282 (ISAL…PHIL), 303-323 (GFMG…IMLV), 355-375 (LFLG…VAGL), 404-424 (VSKI…VLFE), 428-448 (IAFM…PIIL), 464-484 (GGWL…TIWV), and 493-513 (IFPY…GIWL).

The protein belongs to the sodium:solute symporter (SSF) (TC 2.A.21) family.

The protein resides in the cell inner membrane. Its function is as follows. Transports acetate. The protein is Cation/acetate symporter ActP of Escherichia coli O1:K1 / APEC.